A 213-amino-acid polypeptide reads, in one-letter code: Lysozyme g-like protein 2 (213 aa).

The first 19 residues, 1–19 (MVPSVVFWGLIALVGTAKG), serve as a signal peptide directing secretion. Cystine bridges form between Cys40-Cys93 and Cys54-Cys62. Glu106 is a catalytic residue.

Belongs to the glycosyl hydrolase 23 family.

The protein localises to the secreted. Its function is as follows. May act as a potent antibacterial protein that may play a role in the innate immunity. This chain is Lysozyme g-like protein 2 (Lyg2), found in Mus musculus (Mouse).